The primary structure comprises 542 residues: Ribonuclease Y (542 aa).

Residues 1 to 21 (MLIALIAVSVLAVAAIIGSLA) form a helical membrane-spanning segment. The tract at residues 52–92 (SRASQDLADSRKDVAKARAELESSRTRASDEARRADNADQA) is disordered. The segment covering 59–92 (ADSRKDVAKARAELESSRTRASDEARRADNADQA) has biased composition (basic and acidic residues). The KH domain maps to 229–289 (VVSVVPLPSN…MRREVARQAL (61 aa)). The HD domain occupies 355–449 (VLDHCVECAR…VKAADAISAA (95 aa)).

This sequence belongs to the RNase Y family.

Its subcellular location is the cell membrane. Its function is as follows. Endoribonuclease that initiates mRNA decay. This is Ribonuclease Y from Cutibacterium acnes (strain DSM 16379 / KPA171202) (Propionibacterium acnes).